The sequence spans 148 residues: Snaclec 8 (148 aa).

An N-terminal signal peptide occupies residues 1–23 (MGRFIFVSFSLLVVFFSLSGTEA). The C-type lectin domain maps to 34–148 (YDQNCYKAFE…DTQFRLQEPG (115 aa)).

Belongs to the snaclec family. As to quaternary structure, heterodimer; disulfide-linked. Post-translationally, contains disulfide bonds. Expressed by the venom gland.

Its subcellular location is the secreted. Its function is as follows. Interferes with one step of hemostasis (modulation of platelet aggregation, or coagulation cascade, for example). This chain is Snaclec 8, found in Echis carinatus sochureki (Saw-scaled viper).